The chain runs to 1146 residues: ATP-dependent helicase/deoxyribonuclease subunit B (1146 aa).

One can recognise a UvrD-like helicase ATP-binding domain in the interval 1–280 (MSLRFIYGRA…LNSKPLFRFS (280 aa)). 8–15 (GRAGSGKT) is a binding site for ATP. Positions 276–584 (LFRFSQSPEL…LVGSLERSRS (309 aa)) constitute a UvrD-like helicase C-terminal domain. [4Fe-4S] cluster contacts are provided by C786, C1105, C1108, and C1114.

Belongs to the helicase family. AddB/RexB type 1 subfamily. Heterodimer of AddA and AddB. Requires Mg(2+) as cofactor. It depends on [4Fe-4S] cluster as a cofactor.

Its function is as follows. The heterodimer acts as both an ATP-dependent DNA helicase and an ATP-dependent, dual-direction single-stranded exonuclease. Recognizes the chi site generating a DNA molecule suitable for the initiation of homologous recombination. The AddB subunit has 5' -&gt; 3' nuclease activity but not helicase activity. This is ATP-dependent helicase/deoxyribonuclease subunit B from Acetivibrio thermocellus (strain ATCC 27405 / DSM 1237 / JCM 9322 / NBRC 103400 / NCIMB 10682 / NRRL B-4536 / VPI 7372) (Clostridium thermocellum).